An 88-amino-acid polypeptide reads, in one-letter code: Small ribosomal subunit protein uS17 (88 aa).

The protein belongs to the universal ribosomal protein uS17 family. In terms of assembly, part of the 30S ribosomal subunit.

In terms of biological role, one of the primary rRNA binding proteins, it binds specifically to the 5'-end of 16S ribosomal RNA. This Pseudomonas entomophila (strain L48) protein is Small ribosomal subunit protein uS17.